We begin with the raw amino-acid sequence, 298 residues long: Tryptophan 2,3-dioxygenase (298 aa).

Residues 51-55, Tyr113, and Arg117 contribute to the substrate site; that span reads FIIQH. Residue His240 coordinates heme. Position 254 (Thr254) interacts with substrate.

This sequence belongs to the tryptophan 2,3-dioxygenase family. In terms of assembly, homotetramer. The cofactor is heme.

The enzyme catalyses L-tryptophan + O2 = N-formyl-L-kynurenine. It participates in amino-acid degradation; L-tryptophan degradation via kynurenine pathway; L-kynurenine from L-tryptophan: step 1/2. Its function is as follows. Heme-dependent dioxygenase that catalyzes the oxidative cleavage of the L-tryptophan (L-Trp) pyrrole ring and converts L-tryptophan to N-formyl-L-kynurenine. Catalyzes the oxidative cleavage of the indole moiety. In Xanthomonas euvesicatoria pv. vesicatoria (strain 85-10) (Xanthomonas campestris pv. vesicatoria), this protein is Tryptophan 2,3-dioxygenase.